Here is a 202-residue protein sequence, read N- to C-terminus: CASP-like protein 2U7 (202 aa).

The Cytoplasmic portion of the chain corresponds to 1-10 (MLELYEKRRA). Residues 11–31 (LLLLRLAAMFLSLAALLITVL) form a helical membrane-spanning segment. Residues 32–64 (NREDGFFSINVFGSPQPILTKATADFTLVKGLK) lie on the Extracellular side of the membrane. A helical transmembrane segment spans residues 65 to 85 (FFAGAMGIVAGYSFLQLAIAM). The Cytoplasmic portion of the chain corresponds to 86 to 101 (ASMFSGAPSILGGKRM). A helical transmembrane segment spans residues 102-122 (AWLCFVGDMTASHLCAAAAAV). Residues 123–148 (SAQLAYLGKRGAPMWSAVCTYFSHYC) lie on the Extracellular side of the membrane. Residues 149–169 (LVFGLAVIFAFLATLAALLVA) traverse the membrane as a helical segment. At 170–202 (SISSYHLFRLHGILQQQQQQRRQLQQEHVQDKP) the chain is on the cytoplasmic side.

Belongs to the Casparian strip membrane proteins (CASP) family. As to quaternary structure, homodimer and heterodimers.

It localises to the cell membrane. This is CASP-like protein 2U7 from Selaginella moellendorffii (Spikemoss).